We begin with the raw amino-acid sequence, 633 residues long: Electron transfer flavoprotein-ubiquinone oxidoreductase, mitochondrial (633 aa).

Residues 1–90 constitute a mitochondrion transit peptide; it reads MHRFLVKLSS…NGITSSRCIS (90 aa). An FAD-binding site is contributed by 102–116; it reads VLIVGAGPAGLSAAI. Residues 140–161 lie within the membrane without spanning it; sequence VGGHIISGNVFEPLALDELLPH. Positions 334 and 335 each coordinate a ubiquinone. Residues 401-421 lie within the membrane without spanning it; sequence IPYPVFPGGAIIGCSAGFLNV. [4Fe-4S] cluster is bound by residues Cys-578, Cys-602, Cys-605, and Cys-608. In terms of domain architecture, 4Fe-4S ferredoxin-type spans 593–622; sequence PKLQINAQNCLHCKACDIKDPKQNIEWTVP.

This sequence belongs to the ETF-QO/FixC family. The cofactor is [4Fe-4S] cluster. FAD serves as cofactor.

It is found in the mitochondrion inner membrane. The catalysed reaction is a ubiquinone + reduced [electron-transfer flavoprotein] = a ubiquinol + oxidized [electron-transfer flavoprotein] + H(+). Up-regulated by KIN10, by S1-bZIP specific dimers, and also by C/S1 bZIP heterodimers. Accepts electrons from ETF and reduces ubiquinone. May act downstream of IVD and D2HGDH in the degradation of phytol or chlorophyll during dark-induced senescence and sugar starvation. The protein is Electron transfer flavoprotein-ubiquinone oxidoreductase, mitochondrial (ETFQO) of Arabidopsis thaliana (Mouse-ear cress).